The chain runs to 89 residues: uncharacterized protein (89 aa).

This is an uncharacterized protein from Shigella flexneri.